The primary structure comprises 124 residues: Small ribosomal subunit protein uS12 (124 aa).

A disordered region spans residues 1–22; the sequence is MATVNQLVRKPRQKPDAKSNVA. Position 89 is a 3-methylthioaspartic acid (D89).

The protein belongs to the universal ribosomal protein uS12 family. In terms of assembly, part of the 30S ribosomal subunit. Contacts proteins S8 and S17. May interact with IF1 in the 30S initiation complex.

Its function is as follows. With S4 and S5 plays an important role in translational accuracy. Functionally, interacts with and stabilizes bases of the 16S rRNA that are involved in tRNA selection in the A site and with the mRNA backbone. Located at the interface of the 30S and 50S subunits, it traverses the body of the 30S subunit contacting proteins on the other side and probably holding the rRNA structure together. The combined cluster of proteins S8, S12 and S17 appears to hold together the shoulder and platform of the 30S subunit. The polypeptide is Small ribosomal subunit protein uS12 (Pseudoalteromonas atlantica (strain T6c / ATCC BAA-1087)).